Consider the following 248-residue polypeptide: Ribosomal RNA small subunit methyltransferase J (248 aa).

Residues 101-102 (RD), 117-118 (ER), 153-154 (SS), and Asp-171 each bind S-adenosyl-L-methionine.

It belongs to the methyltransferase superfamily. RsmJ family.

It is found in the cytoplasm. The catalysed reaction is guanosine(1516) in 16S rRNA + S-adenosyl-L-methionine = N(2)-methylguanosine(1516) in 16S rRNA + S-adenosyl-L-homocysteine + H(+). Its function is as follows. Specifically methylates the guanosine in position 1516 of 16S rRNA. This chain is Ribosomal RNA small subunit methyltransferase J, found in Proteus mirabilis (strain HI4320).